Consider the following 50-residue polypeptide: Sperm protamine P1 (50 aa).

Intrachain disulfides connect C7-C15 and C39-C47.

This sequence belongs to the protamine P1 family. As to quaternary structure, cross-linked by interchain disulfide bonds around the DNA-helix. Testis.

The protein resides in the nucleus. The protein localises to the chromosome. Functionally, protamines substitute for histones in the chromatin of sperm during the haploid phase of spermatogenesis. They compact sperm DNA into a highly condensed, stable and inactive complex. The polypeptide is Sperm protamine P1 (PRM1) (Oryctolagus cuniculus (Rabbit)).